Reading from the N-terminus, the 370-residue chain is Immunoglobulin superfamily member 5 (370 aa).

An N-terminal signal peptide occupies residues 1 to 24 (MEGSWRDVLAVLVILAQLTASGSS). 2 Ig-like V-type domains span residues 25–125 (YQII…LSVQ) and 128–215 (GTLN…KSLT). At 25–239 (YQIIEGPQNV…EEGPALPTWA (215 aa)) the chain is on the extracellular side. N-linked (GlcNAc...) asparagine glycosylation is found at Asn-33 and Asn-45. A disulfide bond links Cys-46 and Cys-109. 3 N-linked (GlcNAc...) asparagine glycosylation sites follow: Asn-146, Asn-196, and Asn-217. A disulfide bridge connects residues Cys-149 and Cys-201. Residues 240 to 260 (IILLAVAFSLLLILIIVLIII) traverse the membrane as a helical segment. The Cytoplasmic segment spans residues 261 to 370 (FCCCCASRRE…PQKVRNVTLV (110 aa)). The tract at residues 284–359 (ANMRTNKADP…THPRVSFDIA (76 aa)) is disordered. A compositionally biased stretch (basic and acidic residues) spans 289 to 301 (NKADPETKLKGGK).

The protein belongs to the immunoglobulin superfamily. In terms of assembly, interacts with MAGI1 at tight junctions, forms a tripartite complex with NPHS1. Interacts with LNX1 isoform 2 via its PDZ 2 domain, it may also interact with other isoforms containing this domain. In terms of processing, N-glycosylated. As to expression, localized to kidney glomeruli and small intestinal epithelial cells. In kidney glomeruli, it is localized at slit diaphragm. Also found in spermatogonia, gonocytes, hematopoietic stem cells and Sertoli cells.

The protein resides in the apical cell membrane. The protein localises to the cell junction. It localises to the tight junction. Functionally, provides, together with MAGI1, an adhesion machinery at tight junctions, which may regulate the permeability of kidney glomerulus and small intestinal epithelial cells. Mediates calcium-independent homophilic cell adhesion. In testis, it may function as a cell adhesion molecule rather than a tight-junction protein. It may participate in the adhesion between spermatogonia-spermatogonia, spermatogonia-Sertoli cells, and Sertoli cells-Sertoli cells. This Mus musculus (Mouse) protein is Immunoglobulin superfamily member 5 (Igsf5).